Here is a 359-residue protein sequence, read N- to C-terminus: Glycerol-1-phosphate dehydrogenase [NAD(P)+] (359 aa).

NAD(+) contacts are provided by residues 107-111 (GRVID) and 129-132 (TAAS). Asp-134 contributes to the substrate binding site. An NAD(+)-binding site is contributed by Ser-138. A substrate-binding site is contributed by Asp-181. Zn(2+)-binding residues include Asp-181 and His-261. His-265 contributes to the substrate binding site. His-277 contacts Zn(2+).

The protein belongs to the glycerol-1-phosphate dehydrogenase family. Zn(2+) is required as a cofactor.

It is found in the cytoplasm. The enzyme catalyses sn-glycerol 1-phosphate + NAD(+) = dihydroxyacetone phosphate + NADH + H(+). The catalysed reaction is sn-glycerol 1-phosphate + NADP(+) = dihydroxyacetone phosphate + NADPH + H(+). The protein operates within membrane lipid metabolism; glycerophospholipid metabolism. Its function is as follows. Catalyzes the NAD(P)H-dependent reduction of dihydroxyacetonephosphate (DHAP or glycerone phosphate) to glycerol 1-phosphate (G1P). The G1P thus generated is used as the glycerophosphate backbone of phospholipids in the cellular membranes of Archaea. This Methanospirillum hungatei JF-1 (strain ATCC 27890 / DSM 864 / NBRC 100397 / JF-1) protein is Glycerol-1-phosphate dehydrogenase [NAD(P)+].